A 467-amino-acid polypeptide reads, in one-letter code: Inactive pancreatic lipase-related protein 1 (467 aa).

Residues 1-17 (MLIFWTITLFLLGAAKG) form the signal peptide. 2 cysteine pairs are disulfide-bonded: Cys21-Cys27 and Cys109-Cys120. The Nucleophile role is filled by Ser171. Asp194 functions as the Charge relay system in the catalytic mechanism. Positions 205, 208, 210, and 213 each coordinate Ca(2+). An intrachain disulfide couples Cys255 to Cys279. The Charge relay system role is filled by His281. Disulfide bonds link Cys303-Cys314, Cys317-Cys322, and Cys451-Cys467. The 112-residue stretch at 356-467 (WRYGVSITLS…EDTLLTLTPC (112 aa)) folds into the PLAT domain.

It belongs to the AB hydrolase superfamily. Lipase family. As to expression, pancreas.

The protein localises to the secreted. Functionally, may function as inhibitor of dietary triglyceride digestion. Lacks detectable lipase activity towards triglycerides, diglycerides, phosphatidylcholine, galactolipids or cholesterol esters (in vitro). This Homo sapiens (Human) protein is Inactive pancreatic lipase-related protein 1 (PNLIPRP1).